Consider the following 306-residue polypeptide: Methionyl-tRNA formyltransferase (306 aa).

Position 105 to 108 (105 to 108) interacts with (6S)-5,6,7,8-tetrahydrofolate; that stretch reads SLLP.

Belongs to the Fmt family.

The enzyme catalyses L-methionyl-tRNA(fMet) + (6R)-10-formyltetrahydrofolate = N-formyl-L-methionyl-tRNA(fMet) + (6S)-5,6,7,8-tetrahydrofolate + H(+). In terms of biological role, attaches a formyl group to the free amino group of methionyl-tRNA(fMet). The formyl group appears to play a dual role in the initiator identity of N-formylmethionyl-tRNA by promoting its recognition by IF2 and preventing the misappropriation of this tRNA by the elongation apparatus. This is Methionyl-tRNA formyltransferase from Rubrobacter xylanophilus (strain DSM 9941 / JCM 11954 / NBRC 16129 / PRD-1).